Here is a 234-residue protein sequence, read N- to C-terminus: Large ribosomal subunit protein uL1 (234 aa).

It belongs to the universal ribosomal protein uL1 family. As to quaternary structure, part of the 50S ribosomal subunit.

Functionally, binds directly to 23S rRNA. The L1 stalk is quite mobile in the ribosome, and is involved in E site tRNA release. Its function is as follows. Protein L1 is also a translational repressor protein, it controls the translation of the L11 operon by binding to its mRNA. This Escherichia coli O127:H6 (strain E2348/69 / EPEC) protein is Large ribosomal subunit protein uL1.